Here is a 246-residue protein sequence, read N- to C-terminus: Chlorophyll a-b binding protein 6A, chloroplastic (246 aa).

A chloroplast-targeting transit peptide spans 1-45; it reads MASNTLMSCGIPAVCPSFLSSTKSKFAAAMPVYVGATNFMSRFSM. Trp-49 is a chlorophyll b binding site. Chlorophyll a contacts are provided by Phe-69, Glu-88, and His-91. Arg-93 serves as a coordination point for chlorophyll b. The chain crosses the membrane as a helical span at residues 94 to 114; that stretch reads WAMLAVPGIIVPEALGLGNWV. Chlorophyll a is bound at residue Leu-130. A helical membrane pass occupies residues 133–153; the sequence is PVPWGTLPTILAIEFLAIAFV. Residues Val-134, Glu-154, and Arg-157 each contribute to the chlorophyll b site. Positions 191, 192, 195, 197, 209, and 225 each coordinate chlorophyll a.

Belongs to the light-harvesting chlorophyll a/b-binding (LHC) protein family. In terms of assembly, the LHC complex consists of chlorophyll a-b binding proteins. Binds at least 14 chlorophylls (8 Chl-a and 6 Chl-b) and carotenoids such as lutein and neoxanthin. serves as cofactor. Photoregulated by reversible phosphorylation of its threonine residues.

Its subcellular location is the plastid. The protein resides in the chloroplast thylakoid membrane. Functionally, the light-harvesting complex (LHC) functions as a light receptor, it captures and delivers excitation energy to photosystems with which it is closely associated. This chain is Chlorophyll a-b binding protein 6A, chloroplastic (CAB6A), found in Solanum lycopersicum (Tomato).